The primary structure comprises 217 residues: uncharacterized protein (217 aa).

This is an uncharacterized protein from Haemophilus influenzae (strain ATCC 51907 / DSM 11121 / KW20 / Rd).